Consider the following 130-residue polypeptide: Small ribosomal subunit protein uS11c (130 aa).

Belongs to the universal ribosomal protein uS11 family. Part of the 30S ribosomal subunit.

Its subcellular location is the plastid. The protein localises to the chloroplast. The sequence is that of Small ribosomal subunit protein uS11c from Chaetosphaeridium globosum (Charophycean green alga).